The sequence spans 204 residues: N-(5'-phosphoribosyl)anthranilate isomerase (204 aa).

The protein belongs to the TrpF family.

The catalysed reaction is N-(5-phospho-beta-D-ribosyl)anthranilate = 1-(2-carboxyphenylamino)-1-deoxy-D-ribulose 5-phosphate. Its pathway is amino-acid biosynthesis; L-tryptophan biosynthesis; L-tryptophan from chorismate: step 3/5. The chain is N-(5'-phosphoribosyl)anthranilate isomerase from Desulforudis audaxviator (strain MP104C).